We begin with the raw amino-acid sequence, 697 residues long: Choline transporter-like protein 2 (697 aa).

Residues 1-30 are Cytoplasmic-facing; that stretch reads MDMEEKPKYGEPRKFDPSFKGPIQNRGCTD. A helical membrane pass occupies residues 31 to 51; the sequence is IVCCIIFIIAILGYLAVGILA. Residues 52-226 are Extracellular-facing; that stretch reads WTHGDPRKVI…KIFEDYTKSW (175 aa). Asn113 and Asn204 each carry an N-linked (GlcNAc...) asparagine glycan. The helical transmembrane segment at 227–247 threads the bilayer; sequence YWILICLLIAVVLSLIFIVLL. At 248 to 249 the chain is on the cytoplasmic side; sequence RF. Residues 250-270 traverse the membrane as a helical segment; it reads LAGVMVWVMILMVVAVIAYGI. Topologically, residues 271–309 are extracellular; sequence AHCSIKYVSLKDTPGSNITLQQLGFQPDFAVYLHIRQTW. A glycan (N-linked (GlcNAc...) asparagine) is linked at Asn287. A helical transmembrane segment spans residues 310 to 330; that stretch reads LAFIIILAILELIIILLLIFL. The Cytoplasmic portion of the chain corresponds to 331–353; it reads RNRIRVAVELMKEASRAIGYVMS. A helical transmembrane segment spans residues 354-374; the sequence is SLVFPIFTFFLLAIVIAFWGV. Over 375–435 the chain is Extracellular; sequence NAVFLSTSSE…YGGETPYHKY (61 aa). 2 N-linked (GlcNAc...) asparagine glycosylation sites follow: Asn391 and Asn406. The chain crosses the membrane as a helical span at residues 436-456; the sequence is LILLQFYNVFLFFWCANFVTA. Residues 457–498 lie on the Cytoplasmic side of the membrane; the sequence is LGQMTLAGAFASYYWAFDKSKDMPAFPLCASLGRSLRYHTGS. Residues 499–519 traverse the membrane as a helical segment; sequence LAFGSLLLAIVQVIRVLLEYI. At 520–593 the chain is on the extracellular side; it reads DHKLKGAENK…RVVVLDKVTD (74 aa). Residues 594-614 traverse the membrane as a helical segment; it reads FILFLGKLLIVGLVGIFAFFF. Residues 615 to 632 are Cytoplasmic-facing; it reads FSGQTDAFKGTAPSLHYY. The chain crosses the membrane as a helical span at residues 633–653; sequence WVPILTVLVCSYLIAHGFFSV. At 654-697 the chain is on the extracellular side; that stretch reads YAMCVDTLFLCFLEDLERNDGSAERPYLMSENLLNVLKKKNQAN.

This sequence belongs to the CTL (choline transporter-like) family.

The protein resides in the cell membrane. It is found in the mitochondrion outer membrane. It carries out the reaction choline(out) + n H(+)(in) = choline(in) + n H(+)(out). The catalysed reaction is ethanolamine(out) + n H(+)(in) = ethanolamine(in) + n H(+)(out). Functionally, choline/H+ antiporter, mainly in mitochodria. Also acts as a low-affinity ethanolamine/H+ antiporter, regulating the supply of extracellular ethanolamine (Etn) for the CDP-Etn pathway, redistribute intracellular Etn and balance the CDP-Cho and CDP-Etn arms of the Kennedy pathway. The chain is Choline transporter-like protein 2 (slc44a2) from Danio rerio (Zebrafish).